Here is a 112-residue protein sequence, read N- to C-terminus: Large ribosomal subunit protein eL30z (112 aa).

Belongs to the eukaryotic ribosomal protein eL30 family.

The protein is Large ribosomal subunit protein eL30z (RPL30A) of Arabidopsis thaliana (Mouse-ear cress).